The primary structure comprises 350 residues: Dihydroorotase (350 aa).

Positions 17 and 19 each coordinate Zn(2+). Residues 19-21 (HLR) and Asn45 contribute to the substrate site. Residues Lys103, His140, and His178 each coordinate Zn(2+). Lys103 is subject to N6-carboxylysine. Substrate is bound at residue His140. Leu223 is a substrate binding site. Residue Asp251 participates in Zn(2+) binding. Asp251 is a catalytic residue. His255 and Ala267 together coordinate substrate.

The protein belongs to the metallo-dependent hydrolases superfamily. DHOase family. Class II DHOase subfamily. Homodimer. Zn(2+) serves as cofactor.

It catalyses the reaction (S)-dihydroorotate + H2O = N-carbamoyl-L-aspartate + H(+). It participates in pyrimidine metabolism; UMP biosynthesis via de novo pathway; (S)-dihydroorotate from bicarbonate: step 3/3. Its function is as follows. Catalyzes the reversible cyclization of carbamoyl aspartate to dihydroorotate. The chain is Dihydroorotase from Erwinia tasmaniensis (strain DSM 17950 / CFBP 7177 / CIP 109463 / NCPPB 4357 / Et1/99).